The sequence spans 265 residues: GTP cyclohydrolase 1 type 2 homolog (265 aa).

Residues histidine 65, aspartate 103, histidine 225, and glutamate 228 each contribute to the a divalent metal cation site.

Belongs to the GTP cyclohydrolase I type 2/NIF3 family. Homohexamer.

The protein is GTP cyclohydrolase 1 type 2 homolog of Streptococcus pneumoniae serotype 4 (strain ATCC BAA-334 / TIGR4).